Reading from the N-terminus, the 167-residue chain is Interferon gamma (167 aa).

Positions 1-23 are cleaved as a signal peptide; that stretch reads MNYTSFIFAFQLCIILCSSGYYC. Residue Q24 is modified to Pyrrolidone carboxylic acid. N-linked (GlcNAc...) asparagine glycosylation is found at N39 and N107.

The protein belongs to the type II (or gamma) interferon family. As to quaternary structure, homodimer. Interacts with IFNGR1 (via extracellular domain); this interaction promotes IFNGR1 dimerization. As to expression, released primarily from activated T lymphocytes.

It is found in the secreted. In terms of biological role, type II interferon produced by immune cells such as T-cells and NK cells that plays crucial roles in antimicrobial, antiviral, and antitumor responses by activating effector immune cells and enhancing antigen presentation. Primarily signals through the JAK-STAT pathway after interaction with its receptor IFNGR1 to affect gene regulation. Upon IFNG binding, IFNGR1 intracellular domain opens out to allow association of downstream signaling components JAK2, JAK1 and STAT1, leading to STAT1 activation, nuclear translocation and transcription of IFNG-regulated genes. Many of the induced genes are transcription factors such as IRF1 that are able to further drive regulation of a next wave of transcription. Plays a role in class I antigen presentation pathway by inducing a replacement of catalytic proteasome subunits with immunoproteasome subunits. In turn, increases the quantity, quality, and repertoire of peptides for class I MHC loading. Increases the efficiency of peptide generation also by inducing the expression of activator PA28 that associates with the proteasome and alters its proteolytic cleavage preference. Up-regulates as well MHC II complexes on the cell surface by promoting expression of several key molecules such as cathepsins B/CTSB, H/CTSH, and L/CTSL. Participates in the regulation of hematopoietic stem cells during development and under homeostatic conditions by affecting their development, quiescence, and differentiation. This Felis catus (Cat) protein is Interferon gamma (IFNG).